The chain runs to 360 residues: MRNISDLPNDLLVKILSLIPIKVAASTSLLSKRWGSVWKLIPTLDYDGTYSAAALEFFGKFHTLVALRFMKLTIEDVHSTTCFRSVKNLSLLDVKFSSDKTVERLLSCFPILETLVVHRWGADNVKTFAICVPSLQSLNIRYTVGGYHNPKTDHGFVINAPSLKHLDIVDHFSGFCSLVNMPEQLDAEIHLRHIDSEKLLESLTSSKKLSLCLKPQTGSYPGGDFDQLVCLELCVMCSLDWLNLILRRSPKLRSLKLYQSRERNWSCRNSKHVRTKWEQPNSVPECLLVSLETVKWILYKGTQEEKDVVKYLLKNGNFIKTMSIRFSSVVTLEERIHIPMEFEFMGRINSSRCQLSFSKL.

Positions 1 to 53 (MRNISDLPNDLLVKILSLIPIKVAASTSLLSKRWGSVWKLIPTLDYDGTYSAA) constitute an F-box domain. 2 Kelch repeats span residues 140 to 186 (IRYT…EQLD) and 235 to 285 (VMCS…SVPE). One can recognise an FBD domain in the interval 276 to 326 (KWEQPNSVPECLLVSLETVKWILYKGTQEEKDVVKYLLKNGNFIKTMSIRF).

The polypeptide is Putative FBD-associated F-box protein At5g56430 (Arabidopsis thaliana (Mouse-ear cress)).